A 161-amino-acid polypeptide reads, in one-letter code: Troponin C, slow skeletal and cardiac muscles (161 aa).

Methionine 1 is subject to N-acetylmethionine. 4 consecutive EF-hand domains span residues 16–51, 52–87, 92–127, and 128–161; these read QKNEFKAAFDIFVLGAEDGCISTKELGKVMRMLGQN, PTPEELQEMIDEVDEDGSGTVDFDQFLVMMVRCMKD, KTEEELSDLFRMFDKNADGYIDLEELKIMLQATGET, and ITEDDIEELMKDGNKNNDGRIDYDEFLQFMKGVE. 13 residues coordinate Ca(2+): aspartate 65, aspartate 67, serine 69, threonine 71, aspartate 105, asparagine 107, aspartate 109, tyrosine 111, glutamate 116, asparagine 143, aspartate 145, arginine 147, and glutamate 152.

Belongs to the troponin C family.

Its function is as follows. Troponin is the central regulatory protein of striated muscle contraction. Tn consists of three components: Tn-I which is the inhibitor of actomyosin ATPase, Tn-T which contains the binding site for tropomyosin and Tn-C. The binding of calcium to Tn-C abolishes the inhibitory action of Tn on actin filaments. The polypeptide is Troponin C, slow skeletal and cardiac muscles (TNNC1) (Coturnix japonica (Japanese quail)).